Reading from the N-terminus, the 152-residue chain is Aspartate carbamoyltransferase regulatory chain (152 aa).

4 residues coordinate Zn(2+): Cys109, Cys114, Cys138, and Cys141.

Belongs to the PyrI family. As to quaternary structure, contains catalytic and regulatory chains. It depends on Zn(2+) as a cofactor.

Involved in allosteric regulation of aspartate carbamoyltransferase. This Proteus mirabilis (strain HI4320) protein is Aspartate carbamoyltransferase regulatory chain.